A 376-amino-acid chain; its full sequence is 23S rRNA (uracil(747)-C(5))-methyltransferase RlmC (376 aa).

Cys3, Cys11, Cys14, and Cys87 together coordinate [4Fe-4S] cluster. Gln212, Phe241, Glu262, and Asn307 together coordinate S-adenosyl-L-methionine. Residue Cys334 is the Nucleophile of the active site.

The protein belongs to the class I-like SAM-binding methyltransferase superfamily. RNA M5U methyltransferase family. RlmC subfamily.

The enzyme catalyses uridine(747) in 23S rRNA + S-adenosyl-L-methionine = 5-methyluridine(747) in 23S rRNA + S-adenosyl-L-homocysteine + H(+). In terms of biological role, catalyzes the formation of 5-methyl-uridine at position 747 (m5U747) in 23S rRNA. In Yersinia pseudotuberculosis serotype O:1b (strain IP 31758), this protein is 23S rRNA (uracil(747)-C(5))-methyltransferase RlmC.